A 374-amino-acid polypeptide reads, in one-letter code: Potassium channel subfamily K member 9 (374 aa).

The Cytoplasmic portion of the chain corresponds to methionine 1–threonine 8. Residues leucine 9–leucine 29 traverse the membrane as a helical segment. Residues glutamate 30–isoleucine 88 are Extracellular-facing. An N-linked (GlcNAc...) asparagine glycan is attached at asparagine 53. Positions threonine 89–proline 101 form an intramembrane region, pore-forming. K(+) is bound by residues threonine 93, isoleucine 94, glycine 95, and tyrosine 96. The tract at residues threonine 93–histidine 98 is selectivity filter 1. Residues glycine 102–lysine 107 lie on the Extracellular side of the membrane. A helical membrane pass occupies residues alanine 108 to leucine 128. Over glycine 129–asparagine 158 the chain is Cytoplasmic. Residues methionine 159 to serine 179 traverse the membrane as a helical segment. The Extracellular portion of the chain corresponds to glutamine 180 to phenylalanine 194. The segment at residues isoleucine 195 to alanine 207 is an intramembrane region (pore-forming). Threonine 199, isoleucine 200, glycine 201, and phenylalanine 202 together coordinate K(+). A selectivity filter 2 region spans residues threonine 199–aspartate 204. Over leucine 208–proline 218 the chain is Extracellular. A helical transmembrane segment spans residues leucine 219–leucine 239. Over asparagine 240–valine 374 the chain is Cytoplasmic. The interval valine 243–threonine 248 is X-gate.

This sequence belongs to the two pore domain potassium channel (TC 1.A.1.8) family. In terms of assembly, homodimer. Heterodimer with KCNK1. Heterodimer with KCNK3. In terms of tissue distribution, mainly found in the cerebellum. Also found in adrenal gland, kidney and lung.

It localises to the cell membrane. The protein resides in the mitochondrion inner membrane. Its subcellular location is the cell projection. It is found in the dendrite. The enzyme catalyses K(+)(in) = K(+)(out). It catalyses the reaction Na(+)(in) = Na(+)(out). Its activity is regulated as follows. Inhibited by extracellular acidification adopting a nonconductive conformation at pH 6.0. Inhibited by phorbol 12-myristate 13-acetate (PMA). K(+) channel that conducts voltage-dependent outward rectifying currents upon membrane depolarization. Voltage sensing is coupled to K(+) electrochemical gradient in an 'ion flux gating' mode where outward but not inward ion flow opens the gate. Changes ion selectivity and becomes permeable to Na(+) ions in response to extracellular acidification. Protonation of the pH sensor His-98 stabilizes C-type inactivation conformation likely converting the channel from outward K(+)-conducting, to inward Na(+)-conducting to nonconductive state. Homo- and heterodimerizes to form functional channels with distinct regulatory and gating properties. Allows K(+) currents with fast-gating kinetics important for the repolarization and hyperpolarization phases of action potentials. In granule neurons, hyperpolarizes the resting membrane potential to limit intrinsic neuronal excitability, but once the action potential threshold is reached, supports high-frequency action potential firing and increased neuronal excitability. Homomeric and/or heteromeric KCNK3:KCNK9 channels operate in cerebellar granule cells, whereas heteromeric KCNK1:KCNK9 enables currents in hippocampal dentate gyrus granule neurons. Dispensable for central chemosensory respiration i.e. breathing controlled by brainstem CO2/pH, it rather conducts pH-sensitive currents and controls the firing rate of serotonergic raphe neurons involved in potentiation of the respiratory chemoreflex. In retinal ganglion cells, mediates outward currents that regulate action potentials in response to acidification of the synaptic cleft. Involved in transmission of image-forming and nonimage-forming visual information in the retina. In adrenal gland, contributes to the maintenance of a hyperpolarized resting membrane potential of aldosterone-producing cells at zona glomerulosa and limits aldosterone release as part of a regulatory mechanism that controls arterial blood pressure and electrolyte homeostasis. The protein is Potassium channel subfamily K member 9 of Homo sapiens (Human).